The following is a 126-amino-acid chain: uncharacterized protein (126 aa).

This is an uncharacterized protein from Acanthamoeba polyphaga mimivirus (APMV).